The primary structure comprises 431 residues: uncharacterized protein (431 aa).

12 helical membrane-spanning segments follow: residues 33–53 (VARVGTAAAVTALCGYAVIYL), 63–83 (FSVFGVFWGAFGLVTGAANGL), 111–131 (VSGMVGLGSLVVIAGSSPLWS), 143–163 (VALLSIGLAGFCLHATLLGML), 175–195 (LMVADAVIRVVVAAATFVIGW), 197–217 (LVGFIWATVAGSVAWLIMLMT), 241–261 (AHSIIAAGASAILVMGFPVLL), 273–293 (GVVILAVTLTRAPLLVPLTAM), 318–338 (LIGGVGAVGMLAAGVVGPWIM), 358–378 (AAAVAIAMLTLTGAAAVAAAL), 381–401 (AYSLGWVGATVGSGLLLLLPL), and 407–427 (TVVALLCGPLVGIGVHLVALA).

The protein to M.tuberculosis Rv1510 and M.bovis Mb3654.

It localises to the cell membrane. This is an uncharacterized protein from Mycobacterium tuberculosis (strain ATCC 25618 / H37Rv).